The chain runs to 371 residues: Aromatic peroxygenase (371 aa).

The N-terminal stretch at M1–A18 is a signal peptide. A propeptide spanning residues F19–R43 is cleaved from the precursor. N54 carries an N-linked (GlcNAc...) asparagine glycan. C79 provides a ligand contact to heme. N-linked (GlcNAc...) asparagine glycans are attached at residues N184, N204, N225, and N329. C321 and C362 are joined by a disulfide.

Belongs to the chloroperoxidase family. It depends on heme b as a cofactor. In terms of processing, N-glycosylated.

It carries out the reaction RH + H2O2 = ROH + H2O.. In terms of biological role, aromatic peroxidase that oxidizes aryl alcohols into the corresponding aldehydes and then into the corresponding benzoic acids. Oxidizes toluene and naphthalene. Catalyzes the regioselective peroxide-dependent hydroxylation of propranolol and diclofenac to 5-hydroxypropranolol and 4'-hydroxydiclofenac. Catalyzes the regioselective peroxide-dependent hydroxylation of naphthalene to 1-naphthol or 2-naphthol via a naphthalene 1,2-oxide intermediate. Catalyzes the regioselective peroxide-dependent oxidation of pyridine to pyridine N-oxide. Halogenates monochlorodimedone and phenol. Oxidizes the sulfur-containing heterocycle dibenzothiophene to yield ring-hydroxylation products and to a lesser extent sulfoxidation products. This is Aromatic peroxygenase from Cyclocybe aegerita (Black poplar mushroom).